Reading from the N-terminus, the 377-residue chain is P2Y purinoceptor 2 (377 aa).

Residues 1–32 (MAADLGPWNDTINGTWDGDELGYRCRFNEDFK) are Extracellular-facing. N-linked (GlcNAc...) asparagine glycosylation is found at Asn-9 and Asn-13. Residues 33-59 (YVLLPVSYGVVCVPGLCLNAVALYIFL) traverse the membrane as a helical segment. Topologically, residues 60–70 (CRLKTWNASTT) are cytoplasmic. A helical transmembrane segment spans residues 71–93 (YMFHLAVSDALYAASLPLLVYYY). The Extracellular segment spans residues 94–110 (ARGDHWPFSTVLCKLVR). The cysteines at positions 106 and 183 are disulfide-linked. The helical transmembrane segment at 111 to 129 (FLFYTNLYCSILFLTCISV) threads the bilayer. The Cytoplasmic portion of the chain corresponds to 130 to 152 (HRCLGVLRPLRSLRWGRARYARR). Residues 153-172 (VAGAVWVLVLACQAPVLYFV) traverse the membrane as a helical segment. The Extracellular segment spans residues 173–194 (TTSARGGRVTCHDTSAPELFSR). A helical transmembrane segment spans residues 195–220 (FVAYSSVMLGLLFAVPFAVILVCYVL). The Cytoplasmic portion of the chain corresponds to 221 to 246 (MARRLLKPAYGTSGGLPRAKRKSVRT). The chain crosses the membrane as a helical span at residues 247–269 (IAVVLAVFALCFLPFHVTRTLYY). Residues 270–287 (SFRSLDLSCHTLNAINMA) are Extracellular-facing. A helical membrane pass occupies residues 288-309 (YKVTRPLASANSCLDPVLYFLA). Topologically, residues 310 to 377 (GQRLVRFARD…GSENTKDIRL (68 aa)) are cytoplasmic. The disordered stretch occupies residues 318 to 377 (RDAKPPTGPSPATPARRRLGLRRSDRTDMQRIEDVLGSSEDSRRTESTPAGSENTKDIRL). Positions 339–363 (RRSDRTDMQRIEDVLGSSEDSRRTE) are enriched in basic and acidic residues.

The protein belongs to the G-protein coupled receptor 1 family. In terms of tissue distribution, spleen, testis, kidney, liver, lung, heart and brain.

The protein localises to the cell membrane. Receptor for ATP and UTP coupled to G-proteins that activate a phosphatidylinositol-calcium second messenger system. The affinity range is UTP = ATP &gt; ATP-gamma-S &gt;&gt; 2-methylthio-ATP = ADP. In Homo sapiens (Human), this protein is P2Y purinoceptor 2 (P2RY2).